A 314-amino-acid chain; its full sequence is Transcription factor DICHOTOMA (314 aa).

Residues 87-145 (KKDRHSKINRPQGPRDRRVRLSIGIARKFFDLQEMLGFDKPSKTLDWLLTKSKEAIKEL) form the TCP domain. The R domain occupies 201-218 (KESRAKARARARERTKEK).

It localises to the nucleus. Transcription regulator involved in the dorsovental asymmetry of flowers. Promotes dorsal identity. This is Transcription factor DICHOTOMA (DICH) from Antirrhinum majus (Garden snapdragon).